Reading from the N-terminus, the 257-residue chain is UPF0246 protein Spea_1078 (257 aa).

Belongs to the UPF0246 family.

In Shewanella pealeana (strain ATCC 700345 / ANG-SQ1), this protein is UPF0246 protein Spea_1078.